A 178-amino-acid polypeptide reads, in one-letter code: MQNKQNLIWIDLEMTGLDPDTDVIIEMATIITDSELNTLAEGPVIAVHQSDETLAKMDEWNTRQHGGSGLTQRVRESTISMADAEAQTLAFIKLWVPERSSPICGNSICQDRRFLYRHMPALENYFHYRNLDVSTLKELAARWAPELKFKKGSTHLALDDIRESIAELRFYREHFIKP.

The region spanning 7–168 (LIWIDLEMTG…DDIRESIAEL (162 aa)) is the Exonuclease domain. The active site involves Tyr128.

Belongs to the oligoribonuclease family.

It is found in the cytoplasm. Functionally, 3'-to-5' exoribonuclease specific for small oligoribonucleotides. In Pseudomonas syringae pv. tomato (strain ATCC BAA-871 / DC3000), this protein is Oligoribonuclease.